The primary structure comprises 356 residues: Phosphate acyltransferase (356 aa).

This sequence belongs to the PlsX family. In terms of assembly, homodimer. Probably interacts with PlsY.

It localises to the cytoplasm. It catalyses the reaction a fatty acyl-[ACP] + phosphate = an acyl phosphate + holo-[ACP]. The protein operates within lipid metabolism; phospholipid metabolism. Catalyzes the reversible formation of acyl-phosphate (acyl-PO(4)) from acyl-[acyl-carrier-protein] (acyl-ACP). This enzyme utilizes acyl-ACP as fatty acyl donor, but not acyl-CoA. The polypeptide is Phosphate acyltransferase (Bartonella bacilliformis (strain ATCC 35685 / KC583 / Herrer 020/F12,63)).